A 379-amino-acid chain; its full sequence is Anomalous homeobox protein (379 aa).

Residues 135 to 196 constitute a DNA-binding region (homeobox); it reads PEGLKSRNFP…NYRRRQRALP (62 aa). Residues 195–283 are disordered; it reads LPQHMKPAQQ…SKPLDVSGHP (89 aa). The span at 237 to 246 shows a compositional bias: basic and acidic residues; sequence QWSEEREEKG.

It is found in the nucleus. In Homo sapiens (Human), this protein is Anomalous homeobox protein (ANHX).